Consider the following 146-residue polypeptide: Hemoglobin subunit beta (146 aa).

Residues 2–146 form the Globin domain; sequence HWSAEEKQLI…VAHALARKYH (145 aa). Heme b-binding residues include histidine 63 and histidine 92.

The protein belongs to the globin family. As to quaternary structure, heterotetramer of two alpha chains and two beta chains. As to expression, red blood cells.

In terms of biological role, involved in oxygen transport from the lung to the various peripheral tissues. In Columba livia (Rock dove), this protein is Hemoglobin subunit beta (HBB).